Consider the following 429-residue polypeptide: Chordin-like protein 2 (429 aa).

The first 25 residues, 1–25 (MVPEVRVLSSLLGLALLWFPLDSHA), serve as a signal peptide directing secretion. VWFC domains follow at residues 31-96 (MFCL…PKCV) and 109-175 (KSCQ…QACK). N-linked (GlcNAc...) asparagine glycosylation occurs at asparagine 114. Serine 182 bears the Phosphoserine; by FAM20C mark. Residues 182–224 (SDEEDSVQSLHGVRHPQDPCSSDAGRKRGPGTPAPTGLSAPLS) are disordered. One can recognise a VWFC 3 domain in the interval 250–315 (KACVHGGKTY…VAGKCCKICP (66 aa)).

As to quaternary structure, interacts with GDF5. May interact with BMP2, BMP4, BMP5, BMP6, BMP7 and INHBA. In terms of processing, phosphorylated by FAM20C in the extracellular medium. In terms of tissue distribution, highly expressed in uterus. Moderately expressed in heart, liver, prostate, testis and ovary. Weakly expressed in skeletal muscle, kidney, spleen, small intestine and colon. Expressed in the secretory epithelial cells of uterine endometrium, fallopian tubes, endocervical glands, bladder and prostate, as well as the transitional epithelium of the urinary bladder, and in bone osteoblasts (at protein level). In normal cartilage, expression was confined in a few chondrocytes in the superficial zone as well as in the middle zone. In diseased cartilage coming from osteoarthritic patients, expression was limited to the middle zone of chondrocytes. Isoform 1 and isoform 2 are expressed in fetal cerebellum and heart, while only isoform 2 is detected in fetal spleen. Isoform 2 present in plasma.

It localises to the secreted. It is found in the cytoplasm. In terms of biological role, may inhibit BMPs activity by blocking their interaction with their receptors. Has a negative regulator effect on the cartilage formation/regeneration from immature mesenchymal cells, by preventing or reducing the rate of matrix accumulation. Implicated in tumor angiogenesis. May play a role during myoblast and osteoblast differentiation, and maturation. The sequence is that of Chordin-like protein 2 (CHRDL2) from Homo sapiens (Human).